Reading from the N-terminus, the 291-residue chain is Small ribosomal subunit biogenesis GTPase RsgA (291 aa).

A CP-type G domain is found at 63-221 (KNEIKRPPVS…IADTPGFSAL (159 aa)). GTP-binding positions include 112-115 (TKKD) and 164-172 (GQSGVGKST). Residues C245, C250, H252, and C258 each coordinate Zn(2+).

This sequence belongs to the TRAFAC class YlqF/YawG GTPase family. RsgA subfamily. As to quaternary structure, monomer. Associates with 30S ribosomal subunit, binds 16S rRNA. Zn(2+) serves as cofactor.

It localises to the cytoplasm. Functionally, one of several proteins that assist in the late maturation steps of the functional core of the 30S ribosomal subunit. Helps release RbfA from mature subunits. May play a role in the assembly of ribosomal proteins into the subunit. Circularly permuted GTPase that catalyzes slow GTP hydrolysis, GTPase activity is stimulated by the 30S ribosomal subunit. The polypeptide is Small ribosomal subunit biogenesis GTPase RsgA (Staphylococcus saprophyticus subsp. saprophyticus (strain ATCC 15305 / DSM 20229 / NCIMB 8711 / NCTC 7292 / S-41)).